Reading from the N-terminus, the 130-residue chain is Small ribosomal subunit protein uS8 (130 aa).

This sequence belongs to the universal ribosomal protein uS8 family. As to quaternary structure, part of the 30S ribosomal subunit. Contacts proteins S5 and S12.

One of the primary rRNA binding proteins, it binds directly to 16S rRNA central domain where it helps coordinate assembly of the platform of the 30S subunit. This chain is Small ribosomal subunit protein uS8, found in Pseudomonas fluorescens (strain SBW25).